Consider the following 246-residue polypeptide: Probable transcriptional regulatory protein HS_0508 (246 aa).

This sequence belongs to the TACO1 family.

It is found in the cytoplasm. In Histophilus somni (strain 129Pt) (Haemophilus somnus), this protein is Probable transcriptional regulatory protein HS_0508.